A 482-amino-acid chain; its full sequence is Type II methyltransferase M.AvaI (482 aa).

It belongs to the N(4)/N(6)-methyltransferase family. N(4) subfamily.

The catalysed reaction is a 2'-deoxycytidine in DNA + S-adenosyl-L-methionine = an N(4)-methyl-2'-deoxycytidine in DNA + S-adenosyl-L-homocysteine + H(+). An alpha subtype methylase that recognizes the double-stranded sequence 5'-CYCGRG-3', methylates C-1 on both strands, and protects the DNA from cleavage by the AvaI endonuclease. In Anabaena variabilis, this protein is Type II methyltransferase M.AvaI.